A 128-amino-acid chain; its full sequence is MYKSWTLGDPKEKEGVGNILEETKRTQNNTEQASRAINSPLQSPYTDSMKALAISSHWFLPQIHTLPPITKATRHRWPPACCGRRGGQTTLPPLTPIVRACESMERSCPGNYPMQHERKVMQRHPTLR.

A disordered region spans residues 24-43 (KRTQNNTEQASRAINSPLQS). Residues 26–43 (TQNNTEQASRAINSPLQS) are compositionally biased toward polar residues.

This is an uncharacterized protein from Homo sapiens (Human).